Consider the following 288-residue polypeptide: Pantothenate synthetase (288 aa).

An ATP-binding site is contributed by 30–37 (MGFLHEGH). Residue histidine 37 is the Proton donor of the active site. Glutamine 61 is a (R)-pantoate binding site. Residue glutamine 61 participates in beta-alanine binding. Residue 147–150 (GLKD) coordinates ATP. Glutamine 153 provides a ligand contact to (R)-pantoate. ATP-binding positions include valine 176 and 184 to 187 (KSSR).

It belongs to the pantothenate synthetase family. As to quaternary structure, homodimer.

It is found in the cytoplasm. It catalyses the reaction (R)-pantoate + beta-alanine + ATP = (R)-pantothenate + AMP + diphosphate + H(+). It participates in cofactor biosynthesis; (R)-pantothenate biosynthesis; (R)-pantothenate from (R)-pantoate and beta-alanine: step 1/1. Its function is as follows. Catalyzes the condensation of pantoate with beta-alanine in an ATP-dependent reaction via a pantoyl-adenylate intermediate. The protein is Pantothenate synthetase of Bacillus pumilus (strain SAFR-032).